The following is a 200-amino-acid chain: Lipopolysaccharide core heptose(II)-phosphate phosphatase (200 aa).

The signal sequence occupies residues 1-25 (MLAFCRSSLKSKKYFIILLALAAIA).

The protein belongs to the phosphoglycerate mutase family. Ais subfamily.

The protein localises to the periplasm. It participates in bacterial outer membrane biogenesis; lipopolysaccharide metabolism. Functionally, catalyzes the dephosphorylation of heptose(II) of the outer membrane lipopolysaccharide core. This is Lipopolysaccharide core heptose(II)-phosphate phosphatase from Escherichia coli O157:H7 (strain EC4115 / EHEC).